A 216-amino-acid polypeptide reads, in one-letter code: Orotidine 5'-phosphate decarboxylase (216 aa).

Substrate-binding positions include D12, K34, D62–T71, S119, P172–K182, G194, and R195. The active-site Proton donor is the K64.

Belongs to the OMP decarboxylase family. Type 1 subfamily. Homodimer.

The enzyme catalyses orotidine 5'-phosphate + H(+) = UMP + CO2. Its pathway is pyrimidine metabolism; UMP biosynthesis via de novo pathway; UMP from orotate: step 2/2. In terms of biological role, catalyzes the decarboxylation of orotidine 5'-monophosphate (OMP) to uridine 5'-monophosphate (UMP). The sequence is that of Orotidine 5'-phosphate decarboxylase from Methanosphaera stadtmanae (strain ATCC 43021 / DSM 3091 / JCM 11832 / MCB-3).